Reading from the N-terminus, the 247-residue chain is Probable phosphatase swp_1620 (247 aa).

Histidine 8, histidine 10, histidine 16, histidine 41, glutamate 74, histidine 102, histidine 132, aspartate 193, and histidine 195 together coordinate Zn(2+).

This sequence belongs to the PHP family. Zn(2+) serves as cofactor.

The sequence is that of Probable phosphatase swp_1620 from Shewanella piezotolerans (strain WP3 / JCM 13877).